A 455-amino-acid chain; its full sequence is ATP-dependent protease ATPase subunit HslU (455 aa).

Residues Ile19 and 61–66 (GVGKTE) each bind ATP. Residues 144–163 (ESKVGFANEPAEDAASKKEK) are disordered. Positions 268, 333, and 405 each coordinate ATP.

It belongs to the ClpX chaperone family. HslU subfamily. In terms of assembly, a double ring-shaped homohexamer of HslV is capped on each side by a ring-shaped HslU homohexamer. The assembly of the HslU/HslV complex is dependent on binding of ATP.

The protein localises to the cytoplasm. Functionally, ATPase subunit of a proteasome-like degradation complex; this subunit has chaperone activity. The binding of ATP and its subsequent hydrolysis by HslU are essential for unfolding of protein substrates subsequently hydrolyzed by HslV. HslU recognizes the N-terminal part of its protein substrates and unfolds these before they are guided to HslV for hydrolysis. This chain is ATP-dependent protease ATPase subunit HslU, found in Francisella tularensis subsp. holarctica (strain FTNF002-00 / FTA).